Consider the following 264-residue polypeptide: S-adenosylmethionine decarboxylase proenzyme (264 aa).

The Schiff-base intermediate with substrate; via pyruvic acid role is filled by serine 113. Serine 113 carries the post-translational modification Pyruvic acid (Ser); by autocatalysis. The Proton acceptor; for processing activity role is filled by histidine 118. Cysteine 141 serves as the catalytic Proton donor; for catalytic activity.

Belongs to the prokaryotic AdoMetDC family. Type 2 subfamily. In terms of assembly, heterooctamer of four alpha and four beta chains arranged as a tetramer of alpha/beta heterodimers. The cofactor is pyruvate. In terms of processing, is synthesized initially as an inactive proenzyme. Formation of the active enzyme involves a self-maturation process in which the active site pyruvoyl group is generated from an internal serine residue via an autocatalytic post-translational modification. Two non-identical subunits are generated from the proenzyme in this reaction, and the pyruvate is formed at the N-terminus of the alpha chain, which is derived from the carboxyl end of the proenzyme. The post-translation cleavage follows an unusual pathway, termed non-hydrolytic serinolysis, in which the side chain hydroxyl group of the serine supplies its oxygen atom to form the C-terminus of the beta chain, while the remainder of the serine residue undergoes an oxidative deamination to produce ammonia and the pyruvoyl group blocking the N-terminus of the alpha chain.

It carries out the reaction S-adenosyl-L-methionine + H(+) = S-adenosyl 3-(methylsulfanyl)propylamine + CO2. It functions in the pathway amine and polyamine biosynthesis; S-adenosylmethioninamine biosynthesis; S-adenosylmethioninamine from S-adenosyl-L-methionine: step 1/1. Its function is as follows. Catalyzes the decarboxylation of S-adenosylmethionine to S-adenosylmethioninamine (dcAdoMet), the propylamine donor required for the synthesis of the polyamines spermine and spermidine from the diamine putrescine. This is S-adenosylmethionine decarboxylase proenzyme from Pseudomonas aeruginosa (strain UCBPP-PA14).